We begin with the raw amino-acid sequence, 274 residues long: 3-methyl-2-oxobutanoate hydroxymethyltransferase (274 aa).

The Mg(2+) site is built by aspartate 49 and aspartate 88. 3-methyl-2-oxobutanoate contacts are provided by residues 49 to 50 (DS), aspartate 88, and lysine 118. Glutamate 120 serves as a coordination point for Mg(2+). Glutamate 187 serves as the catalytic Proton acceptor.

This sequence belongs to the PanB family. In terms of assembly, homodecamer; pentamer of dimers. Mg(2+) is required as a cofactor.

The protein localises to the cytoplasm. It carries out the reaction 3-methyl-2-oxobutanoate + (6R)-5,10-methylene-5,6,7,8-tetrahydrofolate + H2O = 2-dehydropantoate + (6S)-5,6,7,8-tetrahydrofolate. It functions in the pathway cofactor biosynthesis; (R)-pantothenate biosynthesis; (R)-pantoate from 3-methyl-2-oxobutanoate: step 1/2. Its function is as follows. Catalyzes the reversible reaction in which hydroxymethyl group from 5,10-methylenetetrahydrofolate is transferred onto alpha-ketoisovalerate to form ketopantoate. This chain is 3-methyl-2-oxobutanoate hydroxymethyltransferase, found in Rhodopseudomonas palustris (strain ATCC BAA-98 / CGA009).